The sequence spans 364 residues: Fructose-bisphosphate aldolase B (364 aa).

Residue A2 is modified to N-acetylalanine. At K13 the chain carries N6-succinyllysine. A Phosphoserine modification is found at S36. T39 carries the phosphothreonine modification. Position 43 (R43) interacts with beta-D-fructose 1,6-bisphosphate. A Phosphothreonine modification is found at T119. An N6-succinyllysine modification is found at K121. S132 is modified (phosphoserine). The Proton acceptor role is filled by E188. The active-site Schiff-base intermediate with dihydroxyacetone-P is K230. Phosphoserine occurs at positions 272, 276, 299, and 301. A beta-D-fructose 1,6-bisphosphate-binding site is contributed by 272-274 (SGG). R304 lines the beta-D-fructose 1,6-bisphosphate pocket. Residue S309 is modified to Phosphoserine. Position 317 is an N6-succinyllysine (K317).

This sequence belongs to the class I fructose-bisphosphate aldolase family. As to quaternary structure, homotetramer. Interacts with BBS1, BBS2, BBS4 and BBS7. Forms a ternary complex with G6PD and TP53; this interaction is direct.

The protein resides in the cytoplasm. It is found in the cytosol. The protein localises to the cytoskeleton. It localises to the microtubule organizing center. Its subcellular location is the centrosome. The protein resides in the centriolar satellite. The catalysed reaction is beta-D-fructose 1,6-bisphosphate = D-glyceraldehyde 3-phosphate + dihydroxyacetone phosphate. The enzyme catalyses beta-D-fructose 1-phosphate = D-glyceraldehyde + dihydroxyacetone phosphate. Its pathway is carbohydrate degradation; glycolysis; D-glyceraldehyde 3-phosphate and glycerone phosphate from D-glucose: step 4/4. It participates in carbohydrate biosynthesis; gluconeogenesis. The protein operates within carbohydrate metabolism; fructose metabolism. Catalyzes the aldol cleavage of fructose 1,6-biphosphate to form two triosephosphates dihydroxyacetone phosphate and D-glyceraldehyde 3-phosphate in glycolysis as well as the reverse stereospecific aldol addition reaction in gluconeogenesis. In fructolysis, metabolizes fructose 1-phosphate derived from the phosphorylation of dietary fructose by fructokinase into dihydroxyacetone phosphate and D-glyceraldehyde. Acts as an adapter independently of its enzymatic activity, exerts a tumor suppressor role by stabilizing the ternary complex with G6PD and TP53 to inhibit G6PD activity and keep oxidative pentose phosphate metabolism in check. The sequence is that of Fructose-bisphosphate aldolase B (ALDOB) from Bos taurus (Bovine).